Consider the following 212-residue polypeptide: Protein-L-isoaspartate O-methyltransferase 1 (212 aa).

S60 is an active-site residue.

The protein belongs to the methyltransferase superfamily. L-isoaspartyl/D-aspartyl protein methyltransferase family.

The protein resides in the cytoplasm. It carries out the reaction [protein]-L-isoaspartate + S-adenosyl-L-methionine = [protein]-L-isoaspartate alpha-methyl ester + S-adenosyl-L-homocysteine. In terms of biological role, catalyzes the methyl esterification of L-isoaspartyl residues in peptides and proteins that result from spontaneous decomposition of normal L-aspartyl and L-asparaginyl residues. It plays a role in the repair and/or degradation of damaged proteins. This chain is Protein-L-isoaspartate O-methyltransferase 1, found in Anaeromyxobacter sp. (strain Fw109-5).